The sequence spans 608 residues: Protein Spindly (608 aa).

Methionine 1 is modified (N-acetylmethionine). Residues methionine 1–arginine 445 adopt a coiled-coil conformation. Residues proline 465–histidine 487 form a disordered region. Phosphoserine is present on residues serine 516, serine 518, and serine 558.

This sequence belongs to the Spindly family. Interacts with KNTC1 and ZW10. These interactions appear weak and may be transient or indirect. Interacts with dynein intermediate chain and dynactin (DCTN1). Interacts with the catalytically active form of USP45. In terms of processing, monoubiquitinated with'Lys-48' linkage. Deubiquitinated by USP45.

It is found in the cytoplasm. The protein resides in the cytoskeleton. It localises to the microtubule organizing center. The protein localises to the centrosome. Its subcellular location is the chromosome. It is found in the centromere. The protein resides in the kinetochore. It localises to the nucleus. The protein localises to the spindle pole. Its function is as follows. Required for the localization of dynein and dynactin to the mitotic kintochore. Dynein is believed to control the initial lateral interaction between the kinetochore and spindle microtubules and to facilitate the subsequent formation of end-on kinetochore-microtubule attachments mediated by the NDC80 complex. Also required for correct spindle orientation. Does not appear to be required for the removal of spindle assembly checkpoint (SAC) proteins from the kinetochore upon bipolar spindle attachment. Acts as an adapter protein linking the dynein motor complex to various cargos and converts dynein from a non-processive to a highly processive motor in the presence of dynactin. Facilitates the interaction between dynein and dynactin and activates dynein processivity (the ability to move along a microtubule for a long distance without falling off the track). Plays a role in cell migration. This Mus musculus (Mouse) protein is Protein Spindly (Spdl1).